Reading from the N-terminus, the 534-residue chain is Cytokinin dehydrogenase 1 (534 aa).

The signal sequence occupies residues 1-18 (MAVVYYLLLAGLIACSHA). N-linked (GlcNAc...) asparagine glycans are attached at residues N52, N63, and N89. One can recognise an FAD-binding PCMH-type domain in the interval 65–245 (TSALPAAVLY…TRARIAVEPA (181 aa)). FAD is bound by residues F100, G102, R103, and G104. H105 carries the post-translational modification Pros-8alpha-FAD histidine. FAD contacts are provided by S106 and Q110. The N-linked (GlcNAc...) asparagine glycan is linked to N134. FAD is bound by residues D169, T174, S180, I184, and I235. D169 provides a ligand contact to N(6)-dimethylallyladenine. D169 is a trans-zeatin binding site. N-linked (GlcNAc...) asparagine glycosylation is found at N294, N323, and N338. Residue E381 coordinates N(6)-dimethylallyladenine. Position 381 (E381) interacts with trans-zeatin. The N-linked (GlcNAc...) asparagine glycan is linked to N434. S456 is a trans-zeatin binding site. FAD contacts are provided by Y491, S527, and Q530.

This sequence belongs to the oxygen-dependent FAD-linked oxidoreductase family. In terms of assembly, monomer. It depends on FAD as a cofactor. Post-translationally, glycosylated; with approximately 10 hexose residues per site. Expressed in immature kernels and unpollinated cobs. Weakly expressed in kernels harvested two weeks after anthesis.

The protein resides in the secreted. The protein localises to the extracellular space. It carries out the reaction N(6)-dimethylallyladenine + A + H2O = 3-methyl-2-butenal + adenine + AH2. With respect to regulation, competitive inhibition by phenylureas. In terms of biological role, catalyzes the oxidation of cytokinins, a family of N(6)-substituted adenine derivatives that are plant hormones, where the substituent is an isopentenyl group. Cleaves trans-zeatin, N(6)-dimethylallyladenine (isopentenyladenine), isopentenyladenosine, zeatin riboside and cis-zeatin, but not dihydrozeatin, kinetin and benzylaminopurine. The protein is Cytokinin dehydrogenase 1 (CKX1) of Zea mays (Maize).